A 747-amino-acid chain; its full sequence is Protein Niban 2 (747 aa).

The N-myristoyl glycine moiety is linked to residue G2. The PH domain occupies 68-192; it reads RIIFSGNLFQ…WQAVLQDCVR (125 aa). 2 positions are modified to phosphoserine: S568 and S574. Residues 589 to 747 are disordered; the sequence is WGEQYGDGGD…EDSAGVQTEF (159 aa). Gly residues predominate over residues 593–602; sequence YGDGGDGSDS. S605, S626, S641, S645, S648, S667, S672, S683, S693, and S697 each carry phosphoserine. Over residues 708 to 722 the composition is skewed to basic and acidic residues; the sequence is VDLEPPKPSDQETGE. Residues 734-747 show a composition bias toward polar residues; that stretch reads HTTTEDSAGVQTEF.

Belongs to the Niban family. In terms of processing, as apoptosis proceeds, degraded via an proteasome-independent pathway, probably by caspases.

It is found in the cytoplasm. The protein resides in the cytosol. It localises to the cell junction. The protein localises to the adherens junction. Its subcellular location is the membrane. Its function is as follows. May play a role in apoptosis suppression. The protein is Protein Niban 2 of Rattus norvegicus (Rat).